A 513-amino-acid polypeptide reads, in one-letter code: 2,3-bisphosphoglycerate-independent phosphoglycerate mutase (513 aa).

Residues aspartate 15 and serine 65 each contribute to the Mn(2+) site. The active-site Phosphoserine intermediate is the serine 65. Substrate is bound by residues histidine 126, 156-157 (RD), arginine 188, arginine 194, 263-266 (RADR), and lysine 337. Residues aspartate 402, histidine 406, aspartate 443, histidine 444, and histidine 461 each contribute to the Mn(2+) site.

This sequence belongs to the BPG-independent phosphoglycerate mutase family. In terms of assembly, monomer. It depends on Mn(2+) as a cofactor.

The enzyme catalyses (2R)-2-phosphoglycerate = (2R)-3-phosphoglycerate. It participates in carbohydrate degradation; glycolysis; pyruvate from D-glyceraldehyde 3-phosphate: step 3/5. In terms of biological role, catalyzes the interconversion of 2-phosphoglycerate and 3-phosphoglycerate. The sequence is that of 2,3-bisphosphoglycerate-independent phosphoglycerate mutase from Moorella thermoacetica (strain ATCC 39073 / JCM 9320).